The sequence spans 259 residues: Steroidogenic acute regulatory-like protein 1 (259 aa).

The N-terminal stretch at 1–20 (MTLLPFTCLILLYSLGSVMS) is a signal peptide. In terms of domain architecture, START spans 43–254 (YATALKTCGE…NRRHFQNLKA (212 aa)).

This Caenorhabditis elegans protein is Steroidogenic acute regulatory-like protein 1 (strl-1).